A 266-amino-acid chain; its full sequence is Putative carbamate hydrolase RutD (266 aa).

The protein belongs to the AB hydrolase superfamily. Hydrolase RutD family.

It catalyses the reaction carbamate + 2 H(+) = NH4(+) + CO2. Involved in pyrimidine catabolism. May facilitate the hydrolysis of carbamate, a reaction that can also occur spontaneously. The chain is Putative carbamate hydrolase RutD from Escherichia coli O150:H5 (strain SE15).